We begin with the raw amino-acid sequence, 250 residues long: 5'-nucleotidase SurE (250 aa).

Residues Asp-8, Asp-9, Ser-39, and Asn-95 each contribute to the a divalent metal cation site.

This sequence belongs to the SurE nucleotidase family. The cofactor is a divalent metal cation.

The protein localises to the cytoplasm. It catalyses the reaction a ribonucleoside 5'-phosphate + H2O = a ribonucleoside + phosphate. Its function is as follows. Nucleotidase that shows phosphatase activity on nucleoside 5'-monophosphates. This Syntrophobacter fumaroxidans (strain DSM 10017 / MPOB) protein is 5'-nucleotidase SurE.